The sequence spans 188 residues: Protein GrpE (188 aa).

The segment covering 1–16 has biased composition (basic and acidic residues); sequence MEERNEQVVEEVKEAQ. A disordered region spans residues 1–31; sequence MEERNEQVVEEVKEAQVEEAVTPENSEETVE.

Belongs to the GrpE family. In terms of assembly, homodimer.

The protein resides in the cytoplasm. Its function is as follows. Participates actively in the response to hyperosmotic and heat shock by preventing the aggregation of stress-denatured proteins, in association with DnaK and GrpE. It is the nucleotide exchange factor for DnaK and may function as a thermosensor. Unfolded proteins bind initially to DnaJ; upon interaction with the DnaJ-bound protein, DnaK hydrolyzes its bound ATP, resulting in the formation of a stable complex. GrpE releases ADP from DnaK; ATP binding to DnaK triggers the release of the substrate protein, thus completing the reaction cycle. Several rounds of ATP-dependent interactions between DnaJ, DnaK and GrpE are required for fully efficient folding. The polypeptide is Protein GrpE (Bacillus cereus (strain G9842)).